We begin with the raw amino-acid sequence, 170 residues long: Lipoprotein signal peptidase (170 aa).

Helical transmembrane passes span 12–32, 67–87, and 93–113; these read WYWVVVLVFLADQLSKQWVLA, WQRWLFTLVAVGFSTLLTVWL, and SLWKLNLAYTLVIGGALGNLI. Active-site residues include Asp-123 and Asp-141. The helical transmembrane segment at 137 to 157 threads the bilayer; that stretch reads FNIADSAIFIGAVLIIWDSFF.

It belongs to the peptidase A8 family.

It is found in the cell inner membrane. The enzyme catalyses Release of signal peptides from bacterial membrane prolipoproteins. Hydrolyzes -Xaa-Yaa-Zaa-|-(S,diacylglyceryl)Cys-, in which Xaa is hydrophobic (preferably Leu), and Yaa (Ala or Ser) and Zaa (Gly or Ala) have small, neutral side chains.. It functions in the pathway protein modification; lipoprotein biosynthesis (signal peptide cleavage). Its function is as follows. This protein specifically catalyzes the removal of signal peptides from prolipoproteins. This Shewanella sp. (strain MR-4) protein is Lipoprotein signal peptidase.